Consider the following 91-residue polypeptide: Ixochymostatin (91 aa).

Residues 1–20 (MKTYVLQALLLTLAVAVVRA) form the signal peptide. Cystine bridges form between Cys-34–Cys-70, Cys-43–Cys-66, Cys-48–Cys-62, Cys-53–Cys-90, and Cys-72–Cys-84. Residues 34 to 90 (CAEGETWKECVGSSCAELTCEHPEPSLGCTYDCNYGCYCAPDFFRNANKECVKKDKC) enclose the TIL domain.

This sequence belongs to the serine protease inhibitor-like (TIL domain-containing) family. Salivary gland. Midgut.

The protein resides in the secreted. Its function is as follows. Tight-binding competitive inhibitor of chymotrypsin-like proteases; inhibits host chymase, cathepsin G (CTSG) and chymotrypsin. Inhibits chymase-mediated generation of vasoconstrictor peptides: angiotensin II and endothelin I. Reduces chymase-mediated vascular permeability and vascular endothelial-cadherin degradation. The protein is Ixochymostatin of Ixodes scapularis (Black-legged tick).